A 302-amino-acid polypeptide reads, in one-letter code: MNLDDEFDDDLDAERVPNLGIVAESISQLGIDVLLSGETGTGKDTTARRIHNMSGRQGRFVPMNCAAIPESLAESELFGVVSGAYTGADRSRMGYIEAAQGGTLYLDEIDSMPLALQAKLLRVLETRALERLGSTSTIHLDICVIASAQASLDDAVEEGKFRRDLYFRLNVLTLKLPPLRDQPERILPLFTRFVAASAKELNVAIPDVCPLLQQVLTGHRWPGNIRELKAAAKRHVLGFPLLGADSQTEEHMACGLKFQLRAIEKALIQQALKRHRNCIDAASLELDIPRRTLYRRIKELSI.

The region spanning 9-237 is the Sigma-54 factor interaction domain; that stretch reads DDLDAERVPN…LKAAAKRHVL (229 aa). ATP is bound by residues 37 to 44 and 99 to 108; these read GETGTGKD and AQGGTLYLDE. The H-T-H motif DNA-binding region spans 279 to 298; the sequence is IDAASLELDIPRRTLYRRIK.

Functionally, regulates the activation of the sigma factor HrpL which itself induces the expression of hprD as well as other hrp loci which are involved in plant pathogenicity, hrmA and avr genes. Probably interacts with sigma-54. The polypeptide is Pathogenicity locus probable regulatory protein HrpS (hrpS) (Pseudomonas syringae pv. syringae).